A 194-amino-acid polypeptide reads, in one-letter code: Ion-translocating oxidoreductase complex subunit B (194 aa).

The tract at residues 1 to 26 (MSGVLIAVAALLALAAVFGAVLGFAS) is hydrophobic. A 4Fe-4S domain is found at 32–90 (EGDPIVDQIDSLLPQTQCGQCGHPGCRPYAEAIAEGEEHNRCPPGGQDTVVALSELLGR). Residues C49, C52, C57, C73, C116, C119, C122, C126, C146, C149, C152, and C156 each contribute to the [4Fe-4S] cluster site. 4Fe-4S ferredoxin-type domains follow at residues 107–136 (KVAY…GAAK) and 137–166 (LMHT…MLEV).

It belongs to the 4Fe4S bacterial-type ferredoxin family. RnfB subfamily. The complex is composed of six subunits: RnfA, RnfB, RnfC, RnfD, RnfE and RnfG. The cofactor is [4Fe-4S] cluster.

It localises to the cell inner membrane. Part of a membrane-bound complex that couples electron transfer with translocation of ions across the membrane. The protein is Ion-translocating oxidoreductase complex subunit B of Alcanivorax borkumensis (strain ATCC 700651 / DSM 11573 / NCIMB 13689 / SK2).